The following is a 404-amino-acid chain: Argininosuccinate synthase (404 aa).

ATP is bound by residues 10-18 and Ala-37; that span reads AFSGGLDTS. Residues Tyr-88 and Ser-93 each coordinate L-citrulline. Gly-118 lines the ATP pocket. L-aspartate-binding residues include Thr-120, Asn-124, and Asp-125. Residue Asn-124 participates in L-citrulline binding. The L-citrulline site is built by Arg-128, Ser-179, Ser-188, Glu-264, and Tyr-276.

Belongs to the argininosuccinate synthase family. Type 1 subfamily. As to quaternary structure, homotetramer.

Its subcellular location is the cytoplasm. It catalyses the reaction L-citrulline + L-aspartate + ATP = 2-(N(omega)-L-arginino)succinate + AMP + diphosphate + H(+). The protein operates within amino-acid biosynthesis; L-arginine biosynthesis; L-arginine from L-ornithine and carbamoyl phosphate: step 2/3. This is Argininosuccinate synthase from Nitrosomonas europaea (strain ATCC 19718 / CIP 103999 / KCTC 2705 / NBRC 14298).